The sequence spans 1589 residues: Centrosomal protein of 170 kDa protein B (1589 aa).

Residues 23–73 (IFVGREECELMLQSRSVDKQHAVINYDQDRDEHWVKDLGSLNGTFVNDMRI) enclose the FHA domain. Disordered stretches follow at residues 130-261 (RSEA…GAAP), 287-309 (ITKF…EMVS), 325-388 (LLHR…RLQR), and 409-583 (FDED…EVEE). Basic and acidic residues-rich tracts occupy residues 147 to 156 (RPEKGDRRPG) and 243 to 253 (PAHEMPTKDAE). Residues 330–344 (GPGDDRHSTKSDLPV) are compositionally biased toward basic and acidic residues. Residues serine 360 and serine 421 each carry the phosphoserine modification. 2 stretches are compositionally biased toward basic and acidic residues: residues 430–446 (PKAD…RDRP) and 467–476 (LKREKTEERL). Residues 478–489 (SPSPASRTPARP) show a composition bias toward low complexity. Residues serine 480 and serine 492 each carry the phosphoserine modification. Over residues 520–530 (EKVPPVLPAPL) the composition is skewed to pro residues. Phosphoserine is present on serine 536. The span at 538–548 (VGPPTPPPAPT) shows a compositional bias: pro residues. A Phosphothreonine modification is found at threonine 542. Phosphoserine is present on residues serine 597, serine 619, serine 655, serine 711, serine 721, serine 746, serine 748, serine 751, serine 753, serine 772, serine 829, serine 853, serine 954, serine 972, serine 986, and serine 988. Disordered regions lie at residues 598-895 (PELS…LQDL), 934-1316 (DAEC…PYGF), 1350-1374 (DGDT…TPAS), and 1532-1552 (AQPG…PASA). A compositionally biased stretch (low complexity) spans 711–722 (SPAGPESSRRSG). The segment covering 957–972 (DTASTVSLRSGKSGPS) has biased composition (polar residues). The segment covering 1029-1038 (SAIRRGHRPR) has biased composition (basic residues). Phosphoserine is present on residues serine 1135, serine 1179, and serine 1199. Residues 1221–1230 (AANTATTTGP) are compositionally biased toward polar residues. The span at 1286–1301 (PRAGSSSRARSRAPGP) shows a compositional bias: low complexity. Threonine 1304 carries the post-translational modification Phosphothreonine. Serine 1356 and serine 1362 each carry phosphoserine. Positions 1363–1374 (ASLSNMPSTPAS) are enriched in polar residues. Positions 1542 to 1552 (AAQSPPSPASA) are enriched in low complexity. Residues serine 1545 and serine 1548 each carry the phosphoserine modification.

It belongs to the CEP170 family.

The protein localises to the cytoplasm. Its subcellular location is the cytoskeleton. Functionally, plays a role in microtubule organization. The polypeptide is Centrosomal protein of 170 kDa protein B (CEP170B) (Homo sapiens (Human)).